Reading from the N-terminus, the 84-residue chain is Conotoxin Am6.1 (84 aa).

The first 19 residues, 1–19 (MEKLTILLLVAAVLMSTHA), serve as a signal peptide directing secretion. Positions 20 to 47 (MFQGGGEKSRKAINFSETRKLARNKQKR) are excised as a propeptide. 3 disulfides stabilise this stretch: Cys48–Cys62, Cys55–Cys66, and Cys61–Cys71. Residue Trp51 is modified to 6'-bromotryptophan; in Am6.1b. Residues Glu60 and Glu64 each carry the 4-carboxyglutamate; partial; in Am6.1b and Am6.1c modification. Positions 78-84 (RTTSHPI) are excised as a propeptide.

It belongs to the conotoxin O2 family. In terms of processing, three forms of this peptides have been described. The unmodified Am6.1a (Am3286) is not detected in the venom; Am6.1b (Am3408) is only Trp brominated, while Am6.1c (Am3452) is both Trp brominated and Glu gamma-carboxyglutamated. Both Am6.1b and Am6.1c are detected in the venom. As to expression, expressed by the venom duct.

It localises to the secreted. In terms of biological role, gamma-conotoxins may act on voltage-gated non-specific cation pacemaker channels (HCN). The sequence is that of Conotoxin Am6.1 from Conus amadis (Amadis cone).